Reading from the N-terminus, the 643-residue chain is COP9 signalosome complex subunit 10 (643 aa).

Residues M1–D33 show a composition bias toward acidic residues. The disordered stretch occupies residues M1–R37. Residues C331 to H517 form the PCI domain. Residues D573–S584 show a composition bias toward polar residues. Residues D573 to P594 are disordered.

In terms of assembly, component of a COP9 signalosome-like (CSN) complex.

Its subcellular location is the cytoplasm. The protein localises to the nucleus. Component of the COP9 signalosome (CSN) complex that acts as an regulator of the ubiquitin (Ubl) conjugation pathway by mediating the deneddylation of the cullin subunit of SCF-type E3 ubiquitin-protein ligase complexes. The CSN complex is involved in the regulation of the mating pheromone response. The chain is COP9 signalosome complex subunit 10 (RRI2) from Candida glabrata (strain ATCC 2001 / BCRC 20586 / JCM 3761 / NBRC 0622 / NRRL Y-65 / CBS 138) (Yeast).